A 294-amino-acid polypeptide reads, in one-letter code: MTHDYIVKSLAFDGEIRAYAALTTESVQEAQTRHYTWPTASAAMGRTMTATLLMGSMLKGEQKLTVTVDGKGPIGRIIADADAEGNVRAYVDKPQTHFPLNEQGKLDVRRAVGTDGSIQVVKDVGMKDYFSGASPIVSGELGEDFTYYFATSEQTPSSVGLGVLVNPDNSIKAAGGFIIQVMPGAKDETVTKLENAINNMQPVSKLIEQGLTPEGILNEILGEDNVQILETMQAQFECNCSHEKFLNAIKGLGEAEIQDMIKEDHGAEAICHFCGNKYNYSEAELEDLLASMNA.

2 cysteine pairs are disulfide-bonded: cysteine 238–cysteine 240 and cysteine 271–cysteine 274.

It belongs to the HSP33 family. Post-translationally, under oxidizing conditions two disulfide bonds are formed involving the reactive cysteines. Under reducing conditions zinc is bound to the reactive cysteines and the protein is inactive.

Its subcellular location is the cytoplasm. In terms of biological role, redox regulated molecular chaperone. Protects both thermally unfolding and oxidatively damaged proteins from irreversible aggregation. Plays an important role in the bacterial defense system toward oxidative stress. The chain is 33 kDa chaperonin from Staphylococcus haemolyticus (strain JCSC1435).